We begin with the raw amino-acid sequence, 102 residues long: uncharacterized protein (102 aa).

2 consecutive transmembrane segments (helical) span residues 33 to 55 (VLEL…LVVL) and 57 to 79 (VVGV…VVVA).

The protein resides in the membrane. This is an uncharacterized protein from Saccharomyces cerevisiae (strain ATCC 204508 / S288c) (Baker's yeast).